The following is a 392-amino-acid chain: GTPase Obg (392 aa).

An Obg domain is found at 1-159 (MKFVDEATIL…RDLQLELMLL (159 aa)). The segment at 127–148 (NSRFKSSVNRSPRQKTMGTPGD) is disordered. Positions 129–143 (RFKSSVNRSPRQKTM) are enriched in polar residues. The OBG-type G domain occupies 160–333 (ADVGMLGMPN…LCWDVMAFII (174 aa)). GTP-binding positions include 166 to 173 (GMPNAGKS), 191 to 195 (FTTLV), 213 to 216 (DIPG), 283 to 286 (NKID), and 314 to 316 (SAA). Mg(2+) contacts are provided by Ser-173 and Thr-193. A compositionally biased stretch (acidic residues) spans 363–386 (EQEVEVEDDEEWDEDWDEDDEEGV). A disordered region spans residues 363 to 392 (EQEVEVEDDEEWDEDWDEDDEEGVEFIYKR).

It belongs to the TRAFAC class OBG-HflX-like GTPase superfamily. OBG GTPase family. In terms of assembly, monomer. Requires Mg(2+) as cofactor.

Its subcellular location is the cytoplasm. Its function is as follows. An essential GTPase which binds GTP, GDP and possibly (p)ppGpp with moderate affinity, with high nucleotide exchange rates and a fairly low GTP hydrolysis rate. Plays a role in control of the cell cycle, stress response, ribosome biogenesis and in those bacteria that undergo differentiation, in morphogenesis control. This Enterobacter sp. (strain 638) protein is GTPase Obg.